The following is a 191-amino-acid chain: Pyridoxal 5'-phosphate synthase subunit PdxT (191 aa).

52–54 (GES) lines the L-glutamine pocket. Cysteine 81 acts as the Nucleophile in catalysis. L-glutamine contacts are provided by residues arginine 108 and 136 to 137 (IR). Residues histidine 172 and glutamate 174 each act as charge relay system in the active site.

Belongs to the glutaminase PdxT/SNO family. In the presence of PdxS, forms a dodecamer of heterodimers. Only shows activity in the heterodimer.

The catalysed reaction is aldehydo-D-ribose 5-phosphate + D-glyceraldehyde 3-phosphate + L-glutamine = pyridoxal 5'-phosphate + L-glutamate + phosphate + 3 H2O + H(+). It carries out the reaction L-glutamine + H2O = L-glutamate + NH4(+). The protein operates within cofactor biosynthesis; pyridoxal 5'-phosphate biosynthesis. Catalyzes the hydrolysis of glutamine to glutamate and ammonia as part of the biosynthesis of pyridoxal 5'-phosphate. The resulting ammonia molecule is channeled to the active site of PdxS. The sequence is that of Pyridoxal 5'-phosphate synthase subunit PdxT from Actinobacillus pleuropneumoniae serotype 5b (strain L20).